Reading from the N-terminus, the 285-residue chain is Probable enoyl-CoA hydratase echA12 (285 aa).

Belongs to the enoyl-CoA hydratase/isomerase family.

The catalysed reaction is a (3S)-3-hydroxyacyl-CoA = a (2E)-enoyl-CoA + H2O. It carries out the reaction a 4-saturated-(3S)-3-hydroxyacyl-CoA = a (3E)-enoyl-CoA + H2O. Could possibly oxidize fatty acids using specific components. The polypeptide is Probable enoyl-CoA hydratase echA12 (echA12) (Mycobacterium tuberculosis (strain CDC 1551 / Oshkosh)).